Reading from the N-terminus, the 89-residue chain is MARSLKKGPFVDHHLAKKVESAAGSKKPIKTWSRRSMILPEMVGITIAVHNGKNHIPVLVNENMVGHKLGEFAVTRTFKGHGGDKKSGR.

The protein belongs to the universal ribosomal protein uS19 family.

Its function is as follows. Protein S19 forms a complex with S13 that binds strongly to the 16S ribosomal RNA. This is Small ribosomal subunit protein uS19 from Xanthomonas axonopodis pv. citri (strain 306).